A 307-amino-acid polypeptide reads, in one-letter code: NAD kinase (307 aa).

D85 acts as the Proton acceptor in catalysis. Residues 85–86 (DG), R90, 159–160 (NE), D189, and 200–205 (TAYAFS) contribute to the NAD(+) site.

This sequence belongs to the NAD kinase family. Requires a divalent metal cation as cofactor.

Its subcellular location is the cytoplasm. It carries out the reaction NAD(+) + ATP = ADP + NADP(+) + H(+). In terms of biological role, involved in the regulation of the intracellular balance of NAD and NADP, and is a key enzyme in the biosynthesis of NADP. Catalyzes specifically the phosphorylation on 2'-hydroxyl of the adenosine moiety of NAD to yield NADP. In Mycobacterium bovis (strain ATCC BAA-935 / AF2122/97), this protein is NAD kinase.